The following is a 228-amino-acid chain: Cytochrome c oxidase subunit 2 (228 aa).

Topologically, residues 1-14 (MAYPFQLGFQDATS) are mitochondrial intermembrane. A helical membrane pass occupies residues 15-45 (PIMEELLHFHDHTLMIVFLISSLVLYIISLM). Topologically, residues 46–59 (LTTKLTHTSTMDAQ) are mitochondrial matrix. A helical transmembrane segment spans residues 60–87 (EVETIWTILPAIILILIALPSLRILYMM). The Mitochondrial intermembrane portion of the chain corresponds to 88-228 (DEINNPALTV…FEKWSTSMLT (141 aa)). H161, C196, E198, C200, H204, and M207 together coordinate Cu cation. E198 contributes to the Mg(2+) binding site. Y218 is modified (phosphotyrosine).

This sequence belongs to the cytochrome c oxidase subunit 2 family. Component of the cytochrome c oxidase (complex IV, CIV), a multisubunit enzyme composed of 14 subunits. The complex is composed of a catalytic core of 3 subunits MT-CO1, MT-CO2 and MT-CO3, encoded in the mitochondrial DNA, and 11 supernumerary subunits COX4I, COX5A, COX5B, COX6A, COX6B, COX6C, COX7A, COX7B, COX7C, COX8 and NDUFA4, which are encoded in the nuclear genome. The complex exists as a monomer or a dimer and forms supercomplexes (SCs) in the inner mitochondrial membrane with NADH-ubiquinone oxidoreductase (complex I, CI) and ubiquinol-cytochrome c oxidoreductase (cytochrome b-c1 complex, complex III, CIII), resulting in different assemblies (supercomplex SCI(1)III(2)IV(1) and megacomplex MCI(2)III(2)IV(2)). Found in a complex with TMEM177, COA6, COX18, COX20, SCO1 and SCO2. Interacts with TMEM177 in a COX20-dependent manner. Interacts with COX20. Interacts with COX16. It depends on Cu cation as a cofactor.

It localises to the mitochondrion inner membrane. The catalysed reaction is 4 Fe(II)-[cytochrome c] + O2 + 8 H(+)(in) = 4 Fe(III)-[cytochrome c] + 2 H2O + 4 H(+)(out). Functionally, component of the cytochrome c oxidase, the last enzyme in the mitochondrial electron transport chain which drives oxidative phosphorylation. The respiratory chain contains 3 multisubunit complexes succinate dehydrogenase (complex II, CII), ubiquinol-cytochrome c oxidoreductase (cytochrome b-c1 complex, complex III, CIII) and cytochrome c oxidase (complex IV, CIV), that cooperate to transfer electrons derived from NADH and succinate to molecular oxygen, creating an electrochemical gradient over the inner membrane that drives transmembrane transport and the ATP synthase. Cytochrome c oxidase is the component of the respiratory chain that catalyzes the reduction of oxygen to water. Electrons originating from reduced cytochrome c in the intermembrane space (IMS) are transferred via the dinuclear copper A center (CU(A)) of subunit 2 and heme A of subunit 1 to the active site in subunit 1, a binuclear center (BNC) formed by heme A3 and copper B (CU(B)). The BNC reduces molecular oxygen to 2 water molecules using 4 electrons from cytochrome c in the IMS and 4 protons from the mitochondrial matrix. The protein is Cytochrome c oxidase subunit 2 (MT-CO2) of Sus scrofa (Pig).